A 424-amino-acid chain; its full sequence is Enolase (424 aa).

Glutamine 163 contacts (2R)-2-phosphoglycerate. The Proton donor role is filled by glutamate 205. Positions 242, 285, and 312 each coordinate Mg(2+). 4 residues coordinate (2R)-2-phosphoglycerate: lysine 337, arginine 366, serine 367, and lysine 388. Lysine 337 functions as the Proton acceptor in the catalytic mechanism.

The protein belongs to the enolase family. Requires Mg(2+) as cofactor.

Its subcellular location is the cytoplasm. It localises to the secreted. The protein localises to the cell surface. It catalyses the reaction (2R)-2-phosphoglycerate = phosphoenolpyruvate + H2O. It participates in carbohydrate degradation; glycolysis; pyruvate from D-glyceraldehyde 3-phosphate: step 4/5. Its function is as follows. Catalyzes the reversible conversion of 2-phosphoglycerate (2-PG) into phosphoenolpyruvate (PEP). It is essential for the degradation of carbohydrates via glycolysis. The polypeptide is Enolase (Sphingopyxis alaskensis (strain DSM 13593 / LMG 18877 / RB2256) (Sphingomonas alaskensis)).